Reading from the N-terminus, the 214-residue chain is Probable chemoreceptor glutamine deamidase CheD (214 aa).

This sequence belongs to the CheD family.

It carries out the reaction L-glutaminyl-[protein] + H2O = L-glutamyl-[protein] + NH4(+). Its function is as follows. Probably deamidates glutamine residues to glutamate on methyl-accepting chemotaxis receptors (MCPs), playing an important role in chemotaxis. The chain is Probable chemoreceptor glutamine deamidase CheD from Vibrio vulnificus (strain CMCP6).